A 526-amino-acid chain; its full sequence is Inosine-5'-monophosphate dehydrogenase (526 aa).

CBS domains lie at 120 to 179 and 183 to 239; these read FIQD…EDPV and MATD…PLAS. NAD(+) contacts are provided by residues 276-278 and 326-328; these read DSS and GMG. Residues G328 and G330 each contribute to the K(+) site. IMP is bound at residue S331. Residue C333 coordinates K(+). C333 (thioimidate intermediate) is an active-site residue. IMP-binding positions include 366-368 and 389-390; these read DGG and GS. Residue R439 is the Proton acceptor of the active site. Residue Q451 participates in IMP binding. S506 contributes to the K(+) binding site. A disordered region spans residues 506-526; the sequence is SAQTEGNVHGLHTHEKKLYSS. Basic and acidic residues predominate over residues 517–526; it reads HTHEKKLYSS.

It belongs to the IMPDH/GMPR family. As to quaternary structure, homotetramer. K(+) serves as cofactor.

Its subcellular location is the cytoplasm. It carries out the reaction IMP + NAD(+) + H2O = XMP + NADH + H(+). It functions in the pathway secondary metabolite biosynthesis; terpenoid biosynthesis. Mycophenolic acid (MPA) is a non-competitive inhibitor that prevents formation of the closed enzyme conformation by binding to the same site as the amobile flap. In contrast, mizoribine monophosphate (MZP) is a competitive inhibitor that induces the closed conformation. MPA is a potent inhibitor of mammalian IMPDHs but a poor inhibitor of the bacterial enzymes. MZP is a more potent inhibitor of bacterial IMPDH. Functionally, catalyzes the conversion of inosine 5'-phosphate (IMP) to xanthosine 5'-phosphate (XMP), the first committed and rate-limiting step in the de novo synthesis of guanine nucleotides, and therefore plays an important role in the regulation of cell growth. Part of the gene cluster that mediates the biosynthesis of mycophenolic acid (MPA), the first isolated antibiotic natural product in the world. Does not play a role in the biosynthesis of MPA, but is involved in self resistance to MPA, since MPA acts as an inhibitor of IMP dehydrogenases. This Penicillium roqueforti (strain FM164) protein is Inosine-5'-monophosphate dehydrogenase.